Consider the following 207-residue polypeptide: Large ribosomal subunit protein bL25 (207 aa).

It belongs to the bacterial ribosomal protein bL25 family. CTC subfamily. In terms of assembly, part of the 50S ribosomal subunit; part of the 5S rRNA/L5/L18/L25 subcomplex. Contacts the 5S rRNA. Binds to the 5S rRNA independently of L5 and L18.

This is one of the proteins that binds to the 5S RNA in the ribosome where it forms part of the central protuberance. This chain is Large ribosomal subunit protein bL25, found in Bordetella petrii (strain ATCC BAA-461 / DSM 12804 / CCUG 43448).